The sequence spans 323 residues: Methenyltetrahydromethanopterin cyclohydrolase (323 aa).

This sequence belongs to the MCH family.

It is found in the cytoplasm. The catalysed reaction is 5,10-methenyl-5,6,7,8-tetrahydromethanopterin + H2O = N(5)-formyl-5,6,7,8-tetrahydromethanopterin + H(+). Its pathway is one-carbon metabolism; methanogenesis from CO(2); 5,10-methenyl-5,6,7,8-tetrahydromethanopterin from CO(2): step 3/3. Its function is as follows. Catalyzes the reversible interconversion of 5-formyl-H(4)MPT to methenyl-H(4)MPT(+). This is Methenyltetrahydromethanopterin cyclohydrolase from Methanococcus maripaludis (strain C7 / ATCC BAA-1331).